The primary structure comprises 453 residues: MLNNIVNTIHSDKNQKGTFFIETWGCQMNEEDSEKLSGMLKNIGYKNAEDKNQADIIIFNTCCVRENAELKVYGNLGALKGLKSKNPNLIIAVCGCMMQQEGMAEAIIKKYPFVDIIFGTHNSYKFPEYLNRAKQEGKSIIEVWDKEEEIVEGIPVDRKSSTKAFVTIMYGCNNFCTYCIVPYVRGRERSREVSDIEKEIKELVKSGYKEITLLGQNVNSYGKDLEPKVSFAELLRHVNEIEGIERVRFMTSHPKDLTEDVIYAIKECDKLCNHIHLPVQSGSSRILKKMNRYYNREDYLNLVNKIKEEIPNVAITTDIIVGFPGETEEDFNETLELVKEVEYDSAFTFLYSKRKGTPAYDIEEQVPEDVKHDRFKKLVEVVNKSCEKNNKKYQDRIVKVLVEGESKNDKNKLSGRTDTAKLVNFIGNKDNIGKIVDVKITKTLSFSLEGEEV.

The region spanning 17–135 is the MTTase N-terminal domain; that stretch reads GTFFIETWGC…FPEYLNRAKQ (119 aa). 6 residues coordinate [4Fe-4S] cluster: cysteine 26, cysteine 62, cysteine 96, cysteine 172, cysteine 176, and cysteine 179. Residues 158-388 enclose the Radical SAM core domain; it reads RKSSTKAFVT…VEVVNKSCEK (231 aa). One can recognise a TRAM domain in the interval 391–453; it reads KKYQDRIVKV…LSFSLEGEEV (63 aa).

Belongs to the methylthiotransferase family. MiaB subfamily. As to quaternary structure, monomer. The cofactor is [4Fe-4S] cluster.

The protein resides in the cytoplasm. The enzyme catalyses N(6)-dimethylallyladenosine(37) in tRNA + (sulfur carrier)-SH + AH2 + 2 S-adenosyl-L-methionine = 2-methylsulfanyl-N(6)-dimethylallyladenosine(37) in tRNA + (sulfur carrier)-H + 5'-deoxyadenosine + L-methionine + A + S-adenosyl-L-homocysteine + 2 H(+). Its function is as follows. Catalyzes the methylthiolation of N6-(dimethylallyl)adenosine (i(6)A), leading to the formation of 2-methylthio-N6-(dimethylallyl)adenosine (ms(2)i(6)A) at position 37 in tRNAs that read codons beginning with uridine. The protein is tRNA-2-methylthio-N(6)-dimethylallyladenosine synthase of Clostridium tetani (strain Massachusetts / E88).